The chain runs to 432 residues: 3-phosphoshikimate 1-carboxyvinyltransferase (432 aa).

3-phosphoshikimate-binding residues include Lys23, Ser24, and Arg28. Lys23 lines the phosphoenolpyruvate pocket. Phosphoenolpyruvate is bound by residues Gly95 and Arg123. Ser167, Gln169, Asp317, and Lys344 together coordinate 3-phosphoshikimate. Gln169 lines the phosphoenolpyruvate pocket. Asp317 functions as the Proton acceptor in the catalytic mechanism. Residues Arg348 and Arg390 each contribute to the phosphoenolpyruvate site.

This sequence belongs to the EPSP synthase family. As to quaternary structure, monomer.

The protein resides in the cytoplasm. It catalyses the reaction 3-phosphoshikimate + phosphoenolpyruvate = 5-O-(1-carboxyvinyl)-3-phosphoshikimate + phosphate. It participates in metabolic intermediate biosynthesis; chorismate biosynthesis; chorismate from D-erythrose 4-phosphate and phosphoenolpyruvate: step 6/7. Catalyzes the transfer of the enolpyruvyl moiety of phosphoenolpyruvate (PEP) to the 5-hydroxyl of shikimate-3-phosphate (S3P) to produce enolpyruvyl shikimate-3-phosphate and inorganic phosphate. This is 3-phosphoshikimate 1-carboxyvinyltransferase from Staphylococcus carnosus (strain TM300).